A 196-amino-acid chain; its full sequence is Molybdopterin synthase catalytic subunit (196 aa).

Residues 1-29 (MSTLPSTDPPPLPASTSSQQPAVHIPPPS) form a disordered region. Residues 145–146 (HR), Lys-161, and 168–170 (KRE) contribute to the substrate site. A disordered region spans residues 174–196 (GEPPGQGEWRANRDTDPEGKSTS). Residues 183-196 (RANRDTDPEGKSTS) show a composition bias toward basic and acidic residues.

This sequence belongs to the MoaE family. MOCS2B subfamily. Heterotetramer; composed of 2 small (MOCS2A) and 2 large (MOCS2B) subunits.

The protein localises to the cytoplasm. The enzyme catalyses 2 [molybdopterin-synthase sulfur-carrier protein]-C-terminal-Gly-aminoethanethioate + cyclic pyranopterin phosphate + H2O = molybdopterin + 2 [molybdopterin-synthase sulfur-carrier protein]-C-terminal Gly-Gly + 2 H(+). It functions in the pathway cofactor biosynthesis; molybdopterin biosynthesis. In terms of biological role, catalytic subunit of the molybdopterin synthase complex, a complex that catalyzes the conversion of precursor Z into molybdopterin. Acts by mediating the incorporation of 2 sulfur atoms from thiocarboxylated MOCS2A into precursor Z to generate a dithiolene group. The polypeptide is Molybdopterin synthase catalytic subunit (Coccidioides immitis (strain RS) (Valley fever fungus)).